The sequence spans 355 residues: Peptide chain release factor 1 (355 aa).

Position 230 is an N5-methylglutamine (Gln-230).

The protein belongs to the prokaryotic/mitochondrial release factor family. Methylated by PrmC. Methylation increases the termination efficiency of RF1.

The protein resides in the cytoplasm. Functionally, peptide chain release factor 1 directs the termination of translation in response to the peptide chain termination codons UAG and UAA. The polypeptide is Peptide chain release factor 1 (Geobacter metallireducens (strain ATCC 53774 / DSM 7210 / GS-15)).